A 277-amino-acid chain; its full sequence is Putative ankyrin repeat protein L81 (277 aa).

ANK repeat units lie at residues 150 to 179 (FGQTPMWIATTRCNYRNYVFLKKHGSDLHQ) and 183 to 215 (QGRSLLHATANAVNSECLDIFKDLIANGVDLYQ).

This Acanthamoeba polyphaga (Amoeba) protein is Putative ankyrin repeat protein L81.